A 573-amino-acid chain; its full sequence is Putative inorganic phosphate transporter C1683.01 (573 aa).

Helical transmembrane passes span Met48–Val68, Ala100–Phe120, Phe124–Pro144, Met154–Met174, Leu194–Leu214, and Leu230–Ile250. The segment covering Phe261–Gly270 has biased composition (polar residues). Disordered stretches follow at residues Phe261–Asn280 and Pro290–Thr312. A run of 6 helical transmembrane segments spans residues His348–Leu368, Leu397–Ile417, Trp422–Trp442, Phe451–Ile471, Gly487–Leu507, and Ile510–Phe530.

It belongs to the major facilitator superfamily. Sugar transporter (TC 2.A.1.1) family.

It is found in the endoplasmic reticulum membrane. Functionally, high-affinity transporter for external inorganic phosphate. The protein is Putative inorganic phosphate transporter C1683.01 of Schizosaccharomyces pombe (strain 972 / ATCC 24843) (Fission yeast).